The following is a 284-amino-acid chain: BES1/BZR1 homolog protein 3 (284 aa).

2 disordered regions span residues 1–21 (MTSG…RRER) and 85–116 (GSTS…PSPT). The tract at residues 6-88 (RTPTWKEREN…RMDLMNGSTS (83 aa)) is required for DNA-binding. Over residues 85-97 (GSTSASPCSSYQH) the composition is skewed to polar residues. Low complexity predominate over residues 98 to 114 (SPRASYNPSPSSSSFPS). The residue at position 153 (T153) is a Phosphothreonine.

Belongs to the BZR/LAT61 family. Post-translationally, phosphorylated. Phosphorylation increases protein degradation.

The polypeptide is BES1/BZR1 homolog protein 3 (BEH3) (Arabidopsis thaliana (Mouse-ear cress)).